The following is a 1306-amino-acid chain: Activating transcription factor 7-interacting protein 1 (1306 aa).

Met1 carries the N-acetylmethionine modification. The segment at 1–23 is disordered; it reads MDSVEEPQKKVFKARKTMRASDR. Residue Lys33 forms a Glycyl lysine isopeptide (Lys-Gly) (interchain with G-Cter in SUMO2) linkage. A phosphoserine mark is found at Ser57 and Ser112. Disordered stretches follow at residues 104–470, 496–604, 689–722, 765–785, 871–895, 920–1060, and 1152–1196; these read EDLN…SMET, LPVE…SKRR, AAKDDLKKRQESPPNPPISPGKPANDTNSNNNMT, VVSSQPKLQTSATSGSLPAAP, PLPNPTKPNIPSVPSPSSIQRNSST, RTSL…GPSQ, and AGPQ…STSL. 2 stretches are compositionally biased toward polar residues: residues 109-134 and 143-162; these read EALSPSITCDLSSRVTTEPGSGSPAS and VSDNPASDNPASDNPASDNP. The residue at position 124 (Thr124) is a Phosphothreonine. 3 stretches are compositionally biased toward low complexity: residues 185–212, 246–261, and 284–303; these read EEPPSSDPSSSDPTSSEPSSSEPTCSEP, EAASSEPATSEPASDE, and PSGDSQSDEPPSSEDSLPRS. A compositionally biased stretch (basic and acidic residues) spans 432–441; that stretch reads QSEKDEHKSP. Residues Ser511, Ser514, Ser516, and Ser533 each carry the phosphoserine modification. Over residues 513–523 the composition is skewed to polar residues; it reads GSPSKQESSEN. 3 stretches are compositionally biased toward basic and acidic residues: residues 557–566, 592–601, and 689–699; these read EGEKSEKDGK, KSEDMDSVES, and AAKDDLKKRQE. Positions 587 to 605 match the Nuclear localization signal motif; that stretch reads RRKRSKSEDMDSVESKRRR. A Glycyl lysine isopeptide (Lys-Gly) (interchain with G-Cter in SUMO2) cross-link involves residue Lys592. Position 593 is a phosphoserine (Ser593). The segment at 596–851 is interaction with SETDB1; sequence MDSVESKRRR…NQPSGNVEFI (256 aa). Residues 666-696 adopt a coiled-coil conformation; it reads NKRHKAVLTELQAKIARLTKRFGAAKDDLKK. Ser700 and Ser707 each carry phosphoserine. The segment covering 713-722 has biased composition (polar residues); that stretch reads NDTNSNNNMT. Pro residues predominate over residues 871–884; sequence PLPNPTKPNIPSVP. Ser933 bears the Phosphoserine mark. Glycyl lysine isopeptide (Lys-Gly) (interchain with G-Cter in SUMO2) cross-links involve residues Lys944 and Lys974. Polar residues predominate over residues 948 to 981; sequence STFSPPSSAEQNSSATPRIVTENQTNKTVDSSIN. Low complexity predominate over residues 987 to 1000; that stretch reads STSQSGKASSSDSS. Residues 1001 to 1011 are interaction with SUMO; that stretch reads GVIDLTMDDEE. A compositionally biased stretch (low complexity) spans 1022–1040; it reads SPPSSSTVSTSQPMSRPLQ. The Fibronectin type-III 1 domain occupies 1054-1143; that stretch reads PTSGPSQATI…RVPQTTTYVV (90 aa). A compositionally biased stretch (pro residues) spans 1170–1187; that stretch reads PRPLHPAPLPEAPQPQRL. Residues 1190-1306 form an interaction with MBD1 region; that stretch reads EAASTSLPQK…TDVISSSQNS (117 aa). Residues 1196–1302 enclose the Fibronectin type-III 2 domain; that stretch reads LPQKPHLKLA…DPQSTDVISS (107 aa).

Belongs to the MCAF family. Interacts with MBD1; the interaction is enhanced when MBD1 is sumoylated. Interacts with SETDB1; the interaction protects SETDB1 from proteasomal degradation and is required to stimulate histone methyltransferase activity and facilitate the conversion of dimethylated to trimethylated H3 'Lys-9'. Interacts with SUMO ubiquitin-like proteins (SUMO1, SUNO2 and SUMO3), with a preference for SUMO2 and SUMO3. Interacts with SP1, ATF7 and ZHX1. Interacts with the general transcription machinery, including ERCC2, ERCC3, GTF2E1, GTF2E2 and POLR2A. In terms of tissue distribution, ubiquitously expressed at all stages studied.

The protein resides in the nucleus. Its function is as follows. Recruiter that couples transcriptional factors to general transcription apparatus and thereby modulates transcription regulation and chromatin formation. Can both act as an activator or a repressor depending on the context. Required for HUSH-mediated heterochromatin formation and gene silencing. Mediates MBD1-dependent transcriptional repression, probably by recruiting complexes containing SETDB1. Stabilizes SETDB1, is required to stimulate histone methyltransferase activity of SETDB1 and facilitates the conversion of dimethylated to trimethylated H3 'Lys-9' (H3K9me3). The complex formed with MBD1 and SETDB1 represses transcription and couples DNA methylation and histone H3 'Lys-9' trimethylation (H3K9me3). Facilitates telomerase TERT and TERC gene expression by SP1 in cancer cells. In Mus musculus (Mouse), this protein is Activating transcription factor 7-interacting protein 1 (Atf7ip).